The sequence spans 656 residues: uncharacterized protein (656 aa).

Disordered regions lie at residues 1-41 (MMAT…ESEG) and 60-88 (SNKV…HNLE). Over residues 22–36 (SDSSDSGSDVSFFSV) the composition is skewed to low complexity. Ser39 is subject to Phosphoserine. Residues 62 to 78 (KVEKDSDSEQRGRKKET) show a composition bias toward basic and acidic residues.

It is found in the cytoplasm. The protein resides in the mitochondrion. This is an uncharacterized protein from Saccharomyces cerevisiae (strain ATCC 204508 / S288c) (Baker's yeast).